The following is a 121-amino-acid chain: UPF0102 protein BDI_2565 (121 aa).

This sequence belongs to the UPF0102 family.

This Parabacteroides distasonis (strain ATCC 8503 / DSM 20701 / CIP 104284 / JCM 5825 / NCTC 11152) protein is UPF0102 protein BDI_2565.